The chain runs to 68 residues: Putative membrane protein insertion efficiency factor (68 aa).

The protein belongs to the UPF0161 family.

It localises to the cell inner membrane. Could be involved in insertion of integral membrane proteins into the membrane. The sequence is that of Putative membrane protein insertion efficiency factor from Aquifex aeolicus (strain VF5).